Reading from the N-terminus, the 217-residue chain is Small ribosomal subunit protein uS3 (217 aa).

In terms of domain architecture, KH type-2 spans 38–106; sequence IRKFIDNELK…KVHINVIEIK (69 aa).

The protein belongs to the universal ribosomal protein uS3 family. In terms of assembly, part of the 30S ribosomal subunit. Forms a tight complex with proteins S10 and S14.

Binds the lower part of the 30S subunit head. Binds mRNA in the 70S ribosome, positioning it for translation. The sequence is that of Small ribosomal subunit protein uS3 (rpsC) from Staphylococcus aureus (strain COL).